Consider the following 157-residue polypeptide: Nascent polypeptide-associated complex subunit alpha (157 aa).

Positions threonine 6–leucine 71 constitute an NAC-A/B domain. The span at serine 81–glutamate 107 shows a compositional bias: basic and acidic residues. The interval serine 81–glutamate 116 is disordered. Residues leucine 118 to lysine 157 form the UBA domain.

It belongs to the NAC-alpha family.

It localises to the cytoplasm. Its subcellular location is the nucleus. Its function is as follows. May be involved in mitochondrial protein import by enhancing productive ribosome interactions with the outer mitochondrial membrane and blocks the inappropriate interaction of ribosomes translating non-secretory nascent polypeptides with translocation sites in the membrane of the endoplasmic reticulum. EGD2 may also be involved in transcription regulation. The chain is Nascent polypeptide-associated complex subunit alpha (EGD2) from Encephalitozoon cuniculi (strain GB-M1) (Microsporidian parasite).